The following is a 271-amino-acid chain: Formamidopyrimidine-DNA glycosylase (271 aa).

The active-site Schiff-base intermediate with DNA is the P2. E3 (proton donor) is an active-site residue. The Proton donor; for beta-elimination activity role is filled by K58. DNA-binding residues include H91, R110, and R152. The segment at 237–271 (SIYGKKGRPCPKCGSAIRMMRLGGRSTFFCPLCQK) adopts an FPG-type zinc-finger fold. R261 (proton donor; for delta-elimination activity) is an active-site residue.

The protein belongs to the FPG family. As to quaternary structure, monomer. Requires Zn(2+) as cofactor.

The enzyme catalyses Hydrolysis of DNA containing ring-opened 7-methylguanine residues, releasing 2,6-diamino-4-hydroxy-5-(N-methyl)formamidopyrimidine.. It carries out the reaction 2'-deoxyribonucleotide-(2'-deoxyribose 5'-phosphate)-2'-deoxyribonucleotide-DNA = a 3'-end 2'-deoxyribonucleotide-(2,3-dehydro-2,3-deoxyribose 5'-phosphate)-DNA + a 5'-end 5'-phospho-2'-deoxyribonucleoside-DNA + H(+). Involved in base excision repair of DNA damaged by oxidation or by mutagenic agents. Acts as a DNA glycosylase that recognizes and removes damaged bases. Has a preference for oxidized purines, such as 7,8-dihydro-8-oxoguanine (8-oxoG). Has AP (apurinic/apyrimidinic) lyase activity and introduces nicks in the DNA strand. Cleaves the DNA backbone by beta-delta elimination to generate a single-strand break at the site of the removed base with both 3'- and 5'-phosphates. The sequence is that of Formamidopyrimidine-DNA glycosylase from Geotalea daltonii (strain DSM 22248 / JCM 15807 / FRC-32) (Geobacter daltonii).